Here is a 536-residue protein sequence, read N- to C-terminus: Bicoumarin synthase desC (536 aa).

The chain crosses the membrane as a helical span at residues 12–32 (YVALAGITGFFLVFLGFLVVI). 2 N-linked (GlcNAc...) asparagine glycosylation sites follow: Asn149 and Asn371. Heme is bound at residue Cys480.

The protein belongs to the cytochrome P450 family. Heme serves as cofactor.

The protein resides in the membrane. The catalysed reaction is 2 7-demethylsiderin + NADPH + O2 = desertorin A + NADP(+) + 2 H2O. It functions in the pathway secondary metabolite biosynthesis. Its function is as follows. Non-reducing polyketide synthase; part of the gene cluster that mediates the biosynthesis of the bicoumarin desertorin. The non-reducing polyketide synthase desS first catalyzes the formation of the pentaketidic 4,7-dihydroxy-5-methylcoumarin from acetyl coenzyme A and 4 malonyl coenzyme A molecules. Further O-methylation by desB leads to the formation of 7-demethylsiderin. Then, an oxidative phenol coupling catalyzed by the cytochrome P450 monooxygenase desC forms the 6,8'-dimer M-desertorin A via dimerization the monomeric precursor, 7-demethylsiderin. M-desertorin A is further converted to M-desertorin C. The protein is Bicoumarin synthase desC of Aspergillus desertorum (Emericella desertorum).